The chain runs to 331 residues: Outer membrane lipoprotein PM1514 (331 aa).

The first 20 residues, 1–20 (MQYFDIKKSLPVFCSLLITA), serve as a signal peptide directing secretion. The N-palmitoyl cysteine moiety is linked to residue Cys21. A lipid anchor (S-diacylglycerol cysteine) is attached at Cys21.

Its subcellular location is the cell outer membrane. The protein localises to the cell surface. This chain is Outer membrane lipoprotein PM1514, found in Pasteurella multocida (strain Pm70).